Here is a 127-residue protein sequence, read N- to C-terminus: uncharacterized protein (127 aa).

Residues 1-17 (MQGSVQIQKGNISSSYT) are compositionally biased toward polar residues. The tract at residues 1–36 (MQGSVQIQKGNISSSYTPEKHPSHPTSANGSMSPKR) is disordered.

This is an uncharacterized protein from Treponema pallidum (strain Nichols).